The primary structure comprises 263 residues: Small ribosomal subunit protein uS2 (263 aa).

Positions 223 to 246 (KSLLEQDSDANADEAEVSQEEKDA) are disordered. Residues 228–240 (QDSDANADEAEVS) show a composition bias toward acidic residues.

It belongs to the universal ribosomal protein uS2 family.

This Campylobacter curvus (strain 525.92) protein is Small ribosomal subunit protein uS2.